The primary structure comprises 152 residues: MIYYVIALFVIAIDQISKWLIVKNMELGTSIPIIDNVLYITSHRNRGAAWGILENKMWFFYIITVVFVVFIVFYMKKYAKTDKLLGISLGLILGGAIGNFIDRVFRQEVVDFIHVYIFSYNYPVFNIADSALCIGVVLIIIQTLLEGKKTKE.

A run of 2 helical transmembrane segments spans residues 55–75 (NKMW…VFYM) and 85–105 (LGIS…DRVF). Active-site residues include Asp-111 and Asp-129. A helical membrane pass occupies residues 124 to 144 (VFNIADSALCIGVVLIIIQTL).

Belongs to the peptidase A8 family.

It localises to the cell membrane. The catalysed reaction is Release of signal peptides from bacterial membrane prolipoproteins. Hydrolyzes -Xaa-Yaa-Zaa-|-(S,diacylglyceryl)Cys-, in which Xaa is hydrophobic (preferably Leu), and Yaa (Ala or Ser) and Zaa (Gly or Ala) have small, neutral side chains.. Its pathway is protein modification; lipoprotein biosynthesis (signal peptide cleavage). This protein specifically catalyzes the removal of signal peptides from prolipoproteins. The sequence is that of Lipoprotein signal peptidase from Bacillus cereus (strain ZK / E33L).